Consider the following 218-residue polypeptide: Transmembrane gamma-carboxyglutamic acid protein 1 (218 aa).

A propeptide spanning residues 1–20 is cleaved from the precursor; sequence MGRVFLTGEKANSVLKRYPR. Residues 20 to 66 form the Gla domain; that stretch reads RANGFFEEIRQGNIERECKEEFCTFEEAREAFENNEKTKEFWSTYTK. The Extracellular segment spans residues 21–80; that stretch reads ANGFFEEIRQGNIERECKEEFCTFEEAREAFENNEKTKEFWSTYTKAQQGESNRGSDWFQ. C37 and C42 are disulfide-bonded. The helical transmembrane segment at 81–101 threads the bilayer; sequence FYLTFPLIFGLFIILLVIFLI. Residues 102-218 are Cytoplasmic-facing; sequence WRCFLRNKTR…PMVPVVTTIK (117 aa). Positions 161 to 195 are disordered; sequence TRLSNCDPPPTYEEATGQVNLQRSETEPHLDPPPE.

Post-translationally, gla residues are produced after subsequent post-translational modifications of glutamate by a vitamin K-dependent gamma-carboxylase.

The protein localises to the membrane. The sequence is that of Transmembrane gamma-carboxyglutamic acid protein 1 (PRRG1) from Pongo abelii (Sumatran orangutan).